Reading from the N-terminus, the 114-residue chain is Cytochrome c2 (114 aa).

Residue glutamine 1 is modified to Pyrrolidone carboxylic acid. Residues cysteine 13, cysteine 16, histidine 17, and methionine 93 each contribute to the heme c site.

It belongs to the cytochrome c family. Post-translationally, binds 1 heme c group covalently per subunit.

Its function is as follows. Cytochrome c2 is found mainly in purple, non-sulfur, photosynthetic bacteria where it functions as the electron donor to the oxidized bacteriochlorophyll in the photophosphorylation pathway. However, it may also have a role in the respiratory chain and is found in some non-photosynthetic bacteria. The sequence is that of Cytochrome c2 (cycA) from Rhodopseudomonas palustris.